The chain runs to 116 residues: MHIIHISKFMALLAISTIAIPTRGRSEVDSRDVNQAQTVTSGSSIAPSGSEKRPAWKAEFAEQIAEAQRDKKPFQCPHCKDGISNRVALYTHVKAFHGDKPVYSLKNYHDERRFDS.

The N-terminal stretch at 1-24 (MHIIHISKFMALLAISTIAIPTRG) is a signal peptide. Residues 24–53 (GRSEVDSRDVNQAQTVTSGSSIAPSGSEKR) are disordered. Residues 33–47 (VNQAQTVTSGSSIAP) are compositionally biased toward polar residues. The segment at 74-96 (FQCPHCKDGISNRVALYTHVKAF) adopts a C2H2-type; degenerate zinc-finger fold.

It is found in the secreted. The protein resides in the host nucleus. Probable secreted effector that translocates into the nuclei of host cells to reprogram the expression of targeted genes by binding on effector binding elements in rice. In Pyricularia oryzae (strain 70-15 / ATCC MYA-4617 / FGSC 8958) (Rice blast fungus), this protein is Host transcription reprogramming factor 4.